The sequence spans 348 residues: MNRSSFDLLSTVEYGGCSAKLDPAKLSELLHDIPLPVDSRIMVDVSTHDDAGVYRLNDDTALIVTTDFFPPVCSDPYTFGRIAAANALSDVYAMGGRPLLVLNLTMFPSEGIPVEVLADILRGGQQTIDESGAFTMGGHTIDDPIPKYGLAVTGIVHPEHLVTNAGVRAGQCLVLTKPLGIGVAMAAHRLGLIGSEVYEAAIGQMCLLNRAGAELMQKYGIRGATDITGFGLLGHAKGLAEASDVCLHIDSRSVPVLPECLSLLRDGCIPGAAFRNLRFVGDMLRADCPTEYKMLLADAQTSGGLLMAVDADRAEDLVADLHRTGLHPFAAIIGYATDAEDAAKLIVT.

Cysteine 17 is an active-site residue. ATP is bound by residues lysine 20 and 47 to 49; that span reads THD. Aspartate 50 contributes to the Mg(2+) binding site. Residues aspartate 67, aspartate 90, and 138–140 contribute to the ATP site; that span reads GHT. A Mg(2+)-binding site is contributed by aspartate 90. Residue aspartate 226 coordinates Mg(2+).

This sequence belongs to the selenophosphate synthase 1 family. Class I subfamily. As to quaternary structure, homodimer. Mg(2+) is required as a cofactor.

It catalyses the reaction hydrogenselenide + ATP + H2O = selenophosphate + AMP + phosphate + 2 H(+). Its function is as follows. Synthesizes selenophosphate from selenide and ATP. This chain is Selenide, water dikinase, found in Porphyromonas gingivalis (strain ATCC BAA-308 / W83).